Consider the following 311-residue polypeptide: MTDMSAAYVEAFLEMMSAERGAAANTLQSYERDLEDARSFLRSRGTGLTDASADDLRSYLSHLAGQGFKASSQARRLSALRQFYKFLYAEGLRTDDPTGILDAPKKARTLPKTLSIEDVTRLIGQAEAEAKSGSDDVMAKLRMHALIELLYATGMRVSELVSLPASVLAQNGRFLIIRGKGNKERLVPLSQAAIRAMRAYGEALQEESADSPWLFPSNGKSGHLPRQVFARDLKSLAARAGIRVAAISPHVLRHAFASHLLANGADLRAVQELLGHSDISTTQIYTHVLEERLHDLVQNHHPLAKQAKKQD.

The 86-residue stretch at 3-88 folds into the Core-binding (CB) domain; that stretch reads DMSAAYVEAF…ALRQFYKFLY (86 aa). The Tyr recombinase domain occupies 109–298; it reads TLPKTLSIED…LEERLHDLVQ (190 aa). Residues arginine 156, lysine 180, histidine 250, arginine 253, and histidine 276 contribute to the active site. Tyrosine 285 acts as the O-(3'-phospho-DNA)-tyrosine intermediate in catalysis.

Belongs to the 'phage' integrase family. XerD subfamily. As to quaternary structure, forms a cyclic heterotetrameric complex composed of two molecules of XerC and two molecules of XerD.

Its subcellular location is the cytoplasm. In terms of biological role, site-specific tyrosine recombinase, which acts by catalyzing the cutting and rejoining of the recombining DNA molecules. The XerC-XerD complex is essential to convert dimers of the bacterial chromosome into monomers to permit their segregation at cell division. It also contributes to the segregational stability of plasmids. This is Tyrosine recombinase XerD from Rhizobium meliloti (strain 1021) (Ensifer meliloti).